Consider the following 428-residue polypeptide: 3-phosphoshikimate 1-carboxyvinyltransferase (428 aa).

Residues K23, S24, and R28 each coordinate 3-phosphoshikimate. K23 serves as a coordination point for phosphoenolpyruvate. Phosphoenolpyruvate contacts are provided by G97 and R125. 7 residues coordinate 3-phosphoshikimate: S170, S171, Q172, S198, D314, N337, and K341. Position 172 (Q172) interacts with phosphoenolpyruvate. D314 acts as the Proton acceptor in catalysis. Phosphoenolpyruvate-binding residues include R345, R387, and K412.

Belongs to the EPSP synthase family. As to quaternary structure, monomer.

The protein resides in the cytoplasm. It carries out the reaction 3-phosphoshikimate + phosphoenolpyruvate = 5-O-(1-carboxyvinyl)-3-phosphoshikimate + phosphate. It participates in metabolic intermediate biosynthesis; chorismate biosynthesis; chorismate from D-erythrose 4-phosphate and phosphoenolpyruvate: step 6/7. Its function is as follows. Catalyzes the transfer of the enolpyruvyl moiety of phosphoenolpyruvate (PEP) to the 5-hydroxyl of shikimate-3-phosphate (S3P) to produce enolpyruvyl shikimate-3-phosphate and inorganic phosphate. In Cronobacter sakazakii (strain ATCC BAA-894) (Enterobacter sakazakii), this protein is 3-phosphoshikimate 1-carboxyvinyltransferase.